A 163-amino-acid polypeptide reads, in one-letter code: C-type lectin lectoxin-Lio2 (163 aa).

Positions 1 to 21 (MERFIFAALLVVALSLSGTGA) are cleaved as a signal peptide. 3 disulfides stabilise this stretch: Cys-25/Cys-36, Cys-53/Cys-152, and Cys-127/Cys-144. A C-type lectin domain is found at 32–153 (SDGYCYKVFK…CRSKRYFICK (122 aa)). The Mannose-binding signature appears at 117–119 (EPN). Glu-125 and Asp-141 together coordinate Ca(2+).

It belongs to the true venom lectin family. Expressed by the venom gland.

It is found in the secreted. Functionally, mannose-binding lectin which recognizes specific carbohydrate structures and agglutinates a variety of animal cells by binding to cell-surface glycoproteins and glycolipids. May be a calcium-dependent lectin. In Erythrolamprus poecilogyrus (Water snake), this protein is C-type lectin lectoxin-Lio2.